Here is a 213-residue protein sequence, read N- to C-terminus: MPYLENSESSPDPTPLDAFHCLVQDINKVLGPSSGLDSDDVDPMDIQKLMEDYTSNESEWERYAFGDAGRAYTRNLVDEGNGKCNLLILVWSPGKGSAIHDHANAHCVMKVLKGSLRETLYGWPESDKVQKGEPSPLTVTRDKVYKEGQVTYMSDKLGLHKISNPDPTNFAISLHLYTPPNAAHYGFSLFDEKTGKSRHVKQSVLFSRKGHKL.

Fe cation is bound by residues His-100, His-102, and His-160. The 3'-(S-cysteinyl)-tyrosine (Cys-Tyr) cross-link spans 107-177 (CVMKVLKGSL…TNFAISLHLY (71 aa)).

This sequence belongs to the cysteine dioxygenase family. The cofactor is Fe cation. The thioether cross-link between Cys-107 and Tyr-177 plays a structural role through stabilizing the Fe(2+) ion, and prevents the production of highly damaging free hydroxyl radicals by holding the oxygen radical via hydroxyl hydrogen.

It catalyses the reaction L-cysteine + O2 = 3-sulfino-L-alanine + H(+). This chain is Cysteine dioxygenase (CDO1), found in Ajellomyces capsulatus (strain G186AR / H82 / ATCC MYA-2454 / RMSCC 2432) (Darling's disease fungus).